Reading from the N-terminus, the 379-residue chain is UPF0450 protein C17orf58 homolog (379 aa).

Positions methionine 1 to alanine 17 are cleaved as a signal peptide. Disordered regions lie at residues arginine 76–threonine 95 and threonine 162–histidine 194. Basic and acidic residues predominate over residues serine 180–histidine 194. Intrachain disulfides connect cysteine 234/cysteine 308, cysteine 238/cysteine 312, and cysteine 249/cysteine 378. The NTR domain occupies cysteine 234 to cysteine 378.

This sequence belongs to the UPF0450 family.

This chain is UPF0450 protein C17orf58 homolog, found in Xenopus laevis (African clawed frog).